A 303-amino-acid polypeptide reads, in one-letter code: MTTASTTPNSDTSNLHEVAPDDPIRERIRQAAQNVREQTPLAQSFTNFVTINLVANAQLAAGGTAAMSFLPNDVTSLASSCGATYINVGTLLPFYRDALQEISEHLSRHGCKWVLDPVAAGVGVARTEILKGFKDYPPTVIRANASEALVLHDMWQLGDAAGTDEHNGPAGVEAADSVDAAITAATDLAAYLALHSPTHTGAVAVSGEVDLVTDGRLVYRLPGGSAMMTKITGAGCSLGGVTATYLAVADALVASLAASMLYNVSSGAAERASHGPGSFQTAFLDALWNVTPEEIASAPLYLA.

Positions 1 to 15 (MTTASTTPNSDTSNL) are enriched in polar residues. The disordered stretch occupies residues 1–23 (MTTASTTPNSDTSNLHEVAPDDP). Met-67 serves as a coordination point for substrate. ATP is bound by residues Arg-142 and Ser-206. Gly-233 is a binding site for substrate.

It belongs to the Thz kinase family. The cofactor is Mg(2+).

The catalysed reaction is 5-(2-hydroxyethyl)-4-methylthiazole + ATP = 4-methyl-5-(2-phosphooxyethyl)-thiazole + ADP + H(+). Its pathway is cofactor biosynthesis; thiamine diphosphate biosynthesis; 4-methyl-5-(2-phosphoethyl)-thiazole from 5-(2-hydroxyethyl)-4-methylthiazole: step 1/1. Catalyzes the phosphorylation of the hydroxyl group of 4-methyl-5-beta-hydroxyethylthiazole (THZ). The protein is Hydroxyethylthiazole kinase of Bifidobacterium animalis subsp. lactis (strain AD011).